The following is a 392-amino-acid chain: N-acetylneuraminate epimerase (392 aa).

The N-terminal stretch at 1–35 (MTQIYHQYKKKLSTKVILLSALTLCITFSLPYANA) is a signal peptide. Kelch repeat units lie at residues 56 to 100 (HLYV…VALS), 102 to 155 (KLYV…TTLN), 157 to 192 (TQAL…AVVN), 193 to 238 (AYFD…TAKK), 241 to 290 (LILI…LAGA), 312 to 361 (QQFN…QDKD), and 363 to 392 (VILL…LHLE). Catalysis depends on Glu-247, which acts as the Proton acceptor.

This sequence belongs to the NanM family. In terms of assembly, homodimer.

The protein localises to the periplasm. It catalyses the reaction N-acetyl-alpha-neuraminate = N-acetyl-beta-neuraminate. Functionally, converts alpha-N-acetylneuranimic acid (Neu5Ac) to the beta-anomer, accelerating the equilibrium between the alpha- and beta-anomers. Probably facilitates sialidase-negative bacteria to compete successfully for limited amounts of extracellular Neu5Ac, which is likely taken up in the beta-anomer. In addition, the rapid removal of sialic acid from solution might be advantageous to the bacterium to damp down host responses. The protein is N-acetylneuraminate epimerase of Yersinia enterocolitica serotype O:8 / biotype 1B (strain NCTC 13174 / 8081).